The following is a 477-amino-acid chain: V-type proton ATPase subunit B (477 aa).

Arg-365 lines the ATP pocket.

The protein belongs to the ATPase alpha/beta chains family. As to quaternary structure, V-ATPase is a heteromultimeric enzyme composed of a peripheral catalytic V1 complex (components A to H) attached to an integral membrane V0 proton pore complex (components: a, c, c', c'', d, e, f and VOA1).

The protein localises to the vacuole membrane. In terms of biological role, non-catalytic subunit of the V1 complex of vacuolar(H+)-ATPase (V-ATPase), a multisubunit enzyme composed of a peripheral complex (V1) that hydrolyzes ATP and a membrane integral complex (V0) that translocates protons. V-ATPase is responsible for acidifying and maintaining the pH of intracellular compartments. The protein is V-type proton ATPase subunit B of Encephalitozoon cuniculi (strain GB-M1) (Microsporidian parasite).